Consider the following 500-residue polypeptide: Glycerol kinase (500 aa).

T13 lines the ADP pocket. ATP contacts are provided by T13, T14, and S15. T13 contributes to the sn-glycerol 3-phosphate binding site. R17 provides a ligand contact to ADP. 4 residues coordinate sn-glycerol 3-phosphate: R83, E84, Y135, and D244. Glycerol-binding residues include R83, E84, Y135, D244, and Q245. ADP is bound by residues T266 and G309. ATP-binding residues include T266, G309, Q313, and G410. Residues G410 and N414 each coordinate ADP.

It belongs to the FGGY kinase family.

The enzyme catalyses glycerol + ATP = sn-glycerol 3-phosphate + ADP + H(+). The protein operates within polyol metabolism; glycerol degradation via glycerol kinase pathway; sn-glycerol 3-phosphate from glycerol: step 1/1. With respect to regulation, inhibited by fructose 1,6-bisphosphate (FBP). Functionally, key enzyme in the regulation of glycerol uptake and metabolism. Catalyzes the phosphorylation of glycerol to yield sn-glycerol 3-phosphate. The chain is Glycerol kinase from Burkholderia ambifaria (strain ATCC BAA-244 / DSM 16087 / CCUG 44356 / LMG 19182 / AMMD) (Burkholderia cepacia (strain AMMD)).